The primary structure comprises 201 residues: Recombination protein RecR (201 aa).

The C4-type zinc-finger motif lies at 57–72 (CADCRTFTEQEVCNIC). Residues 81–176 (GQICVVESPA…EASRIAHGVP (96 aa)) form the Toprim domain.

It belongs to the RecR family.

May play a role in DNA repair. It seems to be involved in an RecBC-independent recombinational process of DNA repair. It may act with RecF and RecO. The protein is Recombination protein RecR of Salmonella arizonae (strain ATCC BAA-731 / CDC346-86 / RSK2980).